The sequence spans 266 residues: Non-structural maintenance of chromosomes element 1 homolog (266 aa).

The tract at residues M1–A102 is interaction with NSMCE3. An RING-type; atypical zinc finger spans residues C191–N232. The segment at E246 to H266 is disordered. Residues S256 to H266 are compositionally biased toward basic residues.

It belongs to the NSE1 family. As to quaternary structure, component of the SMC5-SMC6 complex which consists at least of SMC5, SMC6, NSMCE2, NSMCE1, NSMCE4A or EID3 and NSMCE3. NSMCE1, NSMCE4A or EID3 and NSMCE3 probably form a subcomplex that bridges the head domains of the SMC5-SMC6 heterodimer. Interacts with NSMCE3. In terms of processing, ubiquitinated.

Its subcellular location is the nucleus. The protein localises to the chromosome. It localises to the telomere. It catalyses the reaction S-ubiquitinyl-[E2 ubiquitin-conjugating enzyme]-L-cysteine + [acceptor protein]-L-lysine = [E2 ubiquitin-conjugating enzyme]-L-cysteine + N(6)-ubiquitinyl-[acceptor protein]-L-lysine.. Its function is as follows. RING-type zinc finger-containing E3 ubiquitin ligase that assembles with melanoma antigen protein (MAGE) to catalyze the direct transfer of ubiquitin from E2 ubiquitin-conjugating enzyme to a specific substrate. Within MAGE-RING ubiquitin ligase complex, MAGE stimulates and specifies ubiquitin ligase activity likely through recruitment and/or stabilization of the E2 ubiquitin-conjugating enzyme at the E3:substrate complex. Involved in maintenance of genome integrity, DNA damage response and DNA repair. NSMCE3/MAGEG1 and NSMCE1 ubiquitin ligase are components of SMC5-SMC6 complex and may positively regulate homologous recombination-mediated DNA repair. The polypeptide is Non-structural maintenance of chromosomes element 1 homolog (Nsmce1) (Mus musculus (Mouse)).